We begin with the raw amino-acid sequence, 396 residues long: L-lactate dehydrogenase (396 aa).

Residues 1–380 form the FMN hydroxy acid dehydrogenase domain; sequence MIISAASDYR…SGDSLVQELG (380 aa). Tyr-24 provides a ligand contact to substrate. Ser-106 and Gln-127 together coordinate FMN. Tyr-129 contacts substrate. Thr-155 provides a ligand contact to FMN. Arg-164 serves as a coordination point for substrate. Lys-251 lines the FMN pocket. The active-site Proton acceptor is His-275. A substrate-binding site is contributed by Arg-278. 306 to 330 is a binding site for FMN; the sequence is DSGIRNGLDVVRMIALGADTVLLGR.

It belongs to the FMN-dependent alpha-hydroxy acid dehydrogenase family. It depends on FMN as a cofactor.

It is found in the cell inner membrane. The catalysed reaction is (S)-lactate + A = pyruvate + AH2. Functionally, catalyzes the conversion of L-lactate to pyruvate. Is coupled to the respiratory chain. The sequence is that of L-lactate dehydrogenase from Salmonella arizonae (strain ATCC BAA-731 / CDC346-86 / RSK2980).